A 436-amino-acid chain; its full sequence is Gamma-glutamyl phosphate reductase (436 aa).

Belongs to the gamma-glutamyl phosphate reductase family.

It is found in the cytoplasm. It carries out the reaction L-glutamate 5-semialdehyde + phosphate + NADP(+) = L-glutamyl 5-phosphate + NADPH + H(+). It participates in amino-acid biosynthesis; L-proline biosynthesis; L-glutamate 5-semialdehyde from L-glutamate: step 2/2. Its function is as follows. Catalyzes the NADPH-dependent reduction of L-glutamate 5-phosphate into L-glutamate 5-semialdehyde and phosphate. The product spontaneously undergoes cyclization to form 1-pyrroline-5-carboxylate. This is Gamma-glutamyl phosphate reductase from Prochlorococcus marinus (strain MIT 9312).